Reading from the N-terminus, the 181-residue chain is Lysozyme A (181 aa).

A signal peptide spans Met-1–Gly-19. A propeptide spanning residues Leu-139 to Glu-181 is cleaved from the precursor.

This sequence belongs to the dictyostelium lysozyme family. In terms of processing, contains six disulfide bonds.

It is found in the cytoplasmic vesicle lumen. It carries out the reaction Hydrolysis of 1,4-beta-linkages between N-acetylmuramic acid and N-acetyl-D-glucosamine residues in a peptidoglycan.. In terms of biological role, has antibacterial activity against the Gram-positive bacteria B.subtilis, B.megaterium and M.luteus. No antibacterial activity detected against the Gram-positive bacterium S.aureus or against the Gram-negative bacterium E.coli. Lacks chitinase activity. This chain is Lysozyme A, found in Dictyostelium discoideum (Social amoeba).